A 480-amino-acid chain; its full sequence is EGF-like repeat and discoidin I-like domain-containing protein 3 (480 aa).

A signal peptide spans 1–23; the sequence is MKRSVAVWLLVGLSLGVPQFGKG. An EGF-like 1 domain is found at 24–60; sequence DICDPNPCENGGICLPGLADGSFSCECPDGFTDPNCS. 3 disulfides stabilise this stretch: C26/C37, C31/C48, and C50/C59. O-linked (GalNAc...) threonine glycosylation is present at T73. EGF-like domains follow at residues 74–117 and 119–155; these read SAGP…IHCQ and NINE…RNCQ. Cystine bridges form between C78–C89, C83–C105, and C107–C116. The O-linked (Fuc...) threonine glycan is linked to T88. Residues 96–98 carry the Cell attachment site motif; it reads RGD. N119, I120, and E122 together coordinate Ca(2+). 6 disulfide bridges follow: C123–C134, C128–C143, C145–C154, C158–C314, C301–C305, and C319–C476. Ca(2+)-binding residues include D136 and L137. A glycan (N-linked (GlcNAc...) asparagine) is linked at N140. 2 consecutive F5/8 type C domains span residues 158–314 and 319–476; these read CSGP…LLGC and CSEP…LLGC.

It is found in the secreted. In terms of biological role, promotes adhesion of endothelial cells through interaction with the alpha-v/beta-3 integrin receptor. Inhibits formation of vascular-like structures. May be involved in regulation of vascular morphogenesis of remodeling in embryonic development. The polypeptide is EGF-like repeat and discoidin I-like domain-containing protein 3 (EDIL3) (Homo sapiens (Human)).